The sequence spans 227 residues: Transcriptional regulatory protein CusR (227 aa).

Residues 2–116 (KLLIVEDEKK…ELLARVRTLL (115 aa)) enclose the Response regulatory domain. Aspartate 51 carries the 4-aspartylphosphate modification. The segment at residues 125 to 223 (ESQFQVADLM…VRGVGYMLEV (99 aa)) is a DNA-binding region (ompR/PhoB-type).

Phosphorylated by CusS.

The protein resides in the cytoplasm. Functionally, member of the two-component regulatory system CusS/CusR involved in response to copper and silver. This Escherichia coli O6:H1 (strain CFT073 / ATCC 700928 / UPEC) protein is Transcriptional regulatory protein CusR (cusR).